The following is a 286-amino-acid chain: B3 domain-containing protein REM20 (286 aa).

The segment at residues 9-102 (PRFFKVFLVE…TFEVSVFDRW (94 aa)) is a DNA-binding region (TF-B3). The disordered stretch occupies residues 117-161 (SDSDSDSVVEDEKDSTDVVEDDDDEDEDEDEDDDGSFDEDEEISQ). Over residues 119–159 (SDSDSVVEDEKDSTDVVEDDDDEDEDEDEDDDGSFDEDEEI) the composition is skewed to acidic residues.

The protein resides in the nucleus. The sequence is that of B3 domain-containing protein REM20 (REM20) from Arabidopsis thaliana (Mouse-ear cress).